The sequence spans 442 residues: tRNA-2-methylthio-N(6)-dimethylallyladenosine synthase (442 aa).

Residues 3 to 120 enclose the MTTase N-terminal domain; it reads KKLYIETHGC…LPEMIDAARI (118 aa). Positions 12, 49, 83, 157, 161, and 164 each coordinate [4Fe-4S] cluster. One can recognise a Radical SAM core domain in the interval 143-375; it reads RIDGPSAYVS…QHRLNQQGFE (233 aa). Residues 378-442 enclose the TRAM domain; the sequence is RQMVGSVQRI…PHSLRGSLIQ (65 aa).

It belongs to the methylthiotransferase family. MiaB subfamily. Monomer. Requires [4Fe-4S] cluster as cofactor.

It is found in the cytoplasm. The catalysed reaction is N(6)-dimethylallyladenosine(37) in tRNA + (sulfur carrier)-SH + AH2 + 2 S-adenosyl-L-methionine = 2-methylsulfanyl-N(6)-dimethylallyladenosine(37) in tRNA + (sulfur carrier)-H + 5'-deoxyadenosine + L-methionine + A + S-adenosyl-L-homocysteine + 2 H(+). Its function is as follows. Catalyzes the methylthiolation of N6-(dimethylallyl)adenosine (i(6)A), leading to the formation of 2-methylthio-N6-(dimethylallyl)adenosine (ms(2)i(6)A) at position 37 in tRNAs that read codons beginning with uridine. This Pseudomonas fluorescens (strain Pf0-1) protein is tRNA-2-methylthio-N(6)-dimethylallyladenosine synthase.